The primary structure comprises 410 residues: Tyrosine--tRNA ligase (410 aa).

L-tyrosine is bound at residue Tyr36. Residues 41–50 (ATADSLTAGH) carry the 'HIGH' region motif. Residues Tyr169 and Gln173 each contribute to the L-tyrosine site. The 'KMSKS' region motif lies at 229–233 (KMGKT). An ATP-binding site is contributed by Lys232. One can recognise an S4 RNA-binding domain in the interval 343-409 (IDLITMMIDA…GKKAYHLFRA (67 aa)).

Belongs to the class-I aminoacyl-tRNA synthetase family. TyrS type 1 subfamily. As to quaternary structure, homodimer.

The protein resides in the cytoplasm. It catalyses the reaction tRNA(Tyr) + L-tyrosine + ATP = L-tyrosyl-tRNA(Tyr) + AMP + diphosphate + H(+). Catalyzes the attachment of tyrosine to tRNA(Tyr) in a two-step reaction: tyrosine is first activated by ATP to form Tyr-AMP and then transferred to the acceptor end of tRNA(Tyr). This chain is Tyrosine--tRNA ligase, found in Lachnoclostridium phytofermentans (strain ATCC 700394 / DSM 18823 / ISDg) (Clostridium phytofermentans).